A 903-amino-acid chain; its full sequence is Translation initiation factor IF-2 (903 aa).

Disordered regions lie at residues 57 to 171 (EKFK…QRRR) and 267 to 318 (PTPQ…EAVT). The span at 69–163 (KKEAKEPSEK…SEPQKPKESL (95 aa)) shows a compositional bias: basic and acidic residues. Over residues 267 to 278 (PTPQPMQKTKQP) the composition is skewed to low complexity. Residues 299–308 (RRARKKHKKP) are compositionally biased toward basic residues. Residues 402–569 (PRAPVITIMG…IVLLQAEILE (168 aa)) enclose the tr-type G domain. The G1 stretch occupies residues 411–418 (GHVDHGKT). 411–418 (GHVDHGKT) serves as a coordination point for GTP. The segment at 436-440 (GITQH) is G2. The segment at 457 to 460 (DTPG) is G3. GTP-binding positions include 457 to 461 (DTPGH) and 511 to 514 (NKMD). The interval 511–514 (NKMD) is G4. Positions 547 to 549 (SAK) are G5.

This sequence belongs to the TRAFAC class translation factor GTPase superfamily. Classic translation factor GTPase family. IF-2 subfamily.

It is found in the cytoplasm. In terms of biological role, one of the essential components for the initiation of protein synthesis. Protects formylmethionyl-tRNA from spontaneous hydrolysis and promotes its binding to the 30S ribosomal subunits. Also involved in the hydrolysis of GTP during the formation of the 70S ribosomal complex. This Campylobacter curvus (strain 525.92) protein is Translation initiation factor IF-2.